Here is a 209-residue protein sequence, read N- to C-terminus: Na(+)-translocating NADH-quinone reductase subunit D (209 aa).

5 consecutive transmembrane segments (helical) span residues 42 to 62, 66 to 86, 95 to 115, 131 to 151, and 178 to 198; these read VVMT…ISLI, IPNS…VIVV, FEIS…CIVM, FMDG…VGFL, and NGLF…IWAL.

This sequence belongs to the NqrDE/RnfAE family. Composed of six subunits; NqrA, NqrB, NqrC, NqrD, NqrE and NqrF.

The protein localises to the cell inner membrane. It carries out the reaction a ubiquinone + n Na(+)(in) + NADH + H(+) = a ubiquinol + n Na(+)(out) + NAD(+). In terms of biological role, NQR complex catalyzes the reduction of ubiquinone-1 to ubiquinol by two successive reactions, coupled with the transport of Na(+) ions from the cytoplasm to the periplasm. NqrA to NqrE are probably involved in the second step, the conversion of ubisemiquinone to ubiquinol. This is Na(+)-translocating NADH-quinone reductase subunit D from Serratia proteamaculans (strain 568).